Reading from the N-terminus, the 315-residue chain is MLDSKLKAPVFTVRTQGREYGEFVLEPLERGFGVTLGNPLRRILLSSIPGTAVTSVYIEDVLHEFSTIPGVKEDVVEIILNLKELVVRFLNPSLQTVTLLLKAEGPKEVKARDFLPVADVEIMNPDLHIATLEEGGRLNMEVRVDRGVGYVPAEKHGIKDRINAIPVDAVFSPVRRVAFQVEDTRLGQRTDLDKLTLRIWTDGSVTPLEALNQAVEILREHLTYFSNPQAAAVAAPEEAKEPEAPPEQEEELDLPLEELGLSTRVLHSLKEEGIESVRALLALNLKDLKNIPGIGERSLEEIKEALEKKGFTLKE.

The interval 1-229 (MLDSKLKAPV…EHLTYFSNPQ (229 aa)) is alpha N-terminal domain (alpha-NTD). The segment at 247–315 (EQEEELDLPL…LEKKGFTLKE (69 aa)) is alpha C-terminal domain (alpha-CTD).

It belongs to the RNA polymerase alpha chain family. In terms of assembly, homodimer. The RNAP catalytic core consists of 2 alpha, 1 beta, 1 beta' and 1 omega subunit. When a sigma factor is associated with the core the holoenzyme is formed, which can initiate transcription.

The enzyme catalyses RNA(n) + a ribonucleoside 5'-triphosphate = RNA(n+1) + diphosphate. Its function is as follows. DNA-dependent RNA polymerase catalyzes the transcription of DNA into RNA using the four ribonucleoside triphosphates as substrates. This Thermus thermophilus (strain ATCC BAA-163 / DSM 7039 / HB27) protein is DNA-directed RNA polymerase subunit alpha.